A 548-amino-acid chain; its full sequence is Frizzled-7 (548 aa).

The signal sequence occupies residues Met1–Ala19. The Extracellular segment spans residues Gln20–Trp230. Residues Pro31–Gln150 form the FZ domain. Intrachain disulfides connect Cys36–Cys97, Cys44–Cys90, Cys81–Cys118, Cys107–Cys147, and Cys111–Cys135. N-linked (GlcNAc...) asparagine glycosylation is present at Asn50. Asn151 carries N-linked (GlcNAc...) asparagine glycosylation. Residues Val231–Val251 traverse the membrane as a helical segment. The Cytoplasmic portion of the chain corresponds to Asp252–Pro262. Residues Ile263–Leu283 form a helical membrane-spanning segment. The Extracellular segment spans residues Glu284–Cys310. Residues Thr311–Leu331 form a helical membrane-spanning segment. Residues Ser332 to Gln353 are Cytoplasmic-facing. A helical transmembrane segment spans residues Tyr354 to Gly374. Residues Gln375–Gly397 are Extracellular-facing. Residues Phe398–Phe418 form a helical membrane-spanning segment. Over Val419–Arg444 the chain is Cytoplasmic. The chain crosses the membrane as a helical span at residues Ile445–Tyr465. The Extracellular portion of the chain corresponds to Glu466–Thr502. The chain crosses the membrane as a helical span at residues Val503 to Trp523. At Ser524 to Val548 the chain is on the cytoplasmic side. Positions Lys526–Trp531 match the Lys-Thr-X-X-X-Trp motif, mediates interaction with the PDZ domain of Dvl family members motif. The short motif at Thr546–Val548 is the PDZ-binding element.

This sequence belongs to the G-protein coupled receptor Fz/Smo family. In terms of assembly, interacts with wnt11 and sdc4. The extracellular domain interacts with the extracellular domain of pcdh8/papc.

It localises to the cell membrane. The protein resides in the endosome membrane. In terms of biological role, receptor for Wnt proteins. Acts in both canonical and non-canonical Wnt pathways. Although different papers report differing Wnt preferences, wnt5a, wnt8b and wnt11 have been proposed as synergists. In the canonical Wnt pathway, acts via beta-catenin to promote the expression of the dorsal genes siamois, twin and nodal3 and to establish the dorsal axis of the embryo and induce dorsal mesoderm formation. In a non-canonical Wnt/planar cell polarity (PCP) pathway, acts with sdc4 and dvl2/dsh to regulate convergent extension movements in gastrulation. Triggers phosphorylation of dvl2/dsh and its translocation to the plasma membrane. In a third branch of Wnt signaling, acts in a non-canonical pathway via trimeric G proteins, and independently of dvl2/dsh, to recruit protein kinase C (PKC) to the membrane and thus activate PKC. PKC signaling controls cell sorting and tissue separation during gastrulation. In Xenopus tropicalis (Western clawed frog), this protein is Frizzled-7.